The sequence spans 246 residues: Ribonuclease PH (246 aa).

Residues R91 and 129-131 each bind phosphate; that span reads GTR.

The protein belongs to the RNase PH family. As to quaternary structure, homohexameric ring arranged as a trimer of dimers.

It carries out the reaction tRNA(n+1) + phosphate = tRNA(n) + a ribonucleoside 5'-diphosphate. Its function is as follows. Phosphorolytic 3'-5' exoribonuclease that plays an important role in tRNA 3'-end maturation. Removes nucleotide residues following the 3'-CCA terminus of tRNAs; can also add nucleotides to the ends of RNA molecules by using nucleoside diphosphates as substrates, but this may not be physiologically important. Probably plays a role in initiation of 16S rRNA degradation (leading to ribosome degradation) during starvation. In Paraburkholderia phymatum (strain DSM 17167 / CIP 108236 / LMG 21445 / STM815) (Burkholderia phymatum), this protein is Ribonuclease PH.